Here is an 880-residue protein sequence, read N- to C-terminus: Leucine--tRNA ligase (880 aa).

A 'HIGH' region motif is present at residues 46-56 (PYPSGALHMGH). Positions 638 to 642 (KMSKS) match the 'KMSKS' region motif. K641 is a binding site for ATP.

Belongs to the class-I aminoacyl-tRNA synthetase family.

It is found in the cytoplasm. It carries out the reaction tRNA(Leu) + L-leucine + ATP = L-leucyl-tRNA(Leu) + AMP + diphosphate. This is Leucine--tRNA ligase from Xanthomonas euvesicatoria pv. vesicatoria (strain 85-10) (Xanthomonas campestris pv. vesicatoria).